The primary structure comprises 575 residues: Major outer membrane protein MspA (575 aa).

An N-terminal signal peptide occupies residues 1–19; the sequence is MKKALVFFVALAMIGSVFA.

The protein resides in the cell outer membrane. Its function is as follows. Major component of the outer membrane sheath. The chain is Major outer membrane protein MspA (mspA) from Treponema maltophilum.